Here is a 107-residue protein sequence, read N- to C-terminus: Protein KleE (107 aa).

This Escherichia coli protein is Protein KleE (kleE).